The chain runs to 448 residues: MSPIDALFLSAESREHPLHVGALQLFEPPAGAGRGFVRETYQAMLQCREIAPLFRKRPTSLHGALINLGWSTDADVDLGYHARRSALPAPGRVRELLELTSRLHSNLLDRHRPLWETHVIEGLRDGRFAIYSKMHHALVDGVSGLTLMRQPMTTDPIEGKLRTAWSPATQHTAIKRRRGRLQQLGGMLGSVAGLAPSTLRLARSALIEQQLTLPFGAPHTMLNVAVGGARRCAAQSWPLDRVKAVKDAAGVSLNDVVLAMCAGALREYLDDNDALPDTPLVAMVPVSLRTDRDSVGGNMVGAVLCNLATHLDDPADRLNAIHASMRGNKNVLSQLPRAQALAVSLLLLSPAALNTLPGLAKATPPPFNVCISNVPGAREPLYFNGARMVGNYPMSLVLDGQALNITLTSTADSLDFGVVGCRRSVPHVQRVLSHLETSLKELERAVGL.

The active-site Proton acceptor is His-136.

Belongs to the long-chain O-acyltransferase family.

The catalysed reaction is an acyl-CoA + a 1,2-diacyl-sn-glycerol = a triacyl-sn-glycerol + CoA. It functions in the pathway glycerolipid metabolism; triacylglycerol biosynthesis. This Mycobacterium tuberculosis (strain CDC 1551 / Oshkosh) protein is Putative diacyglycerol O-acyltransferase MT3848.